Reading from the N-terminus, the 361-residue chain is Histidinol-phosphate aminotransferase (361 aa).

N6-(pyridoxal phosphate)lysine is present on lysine 219.

The protein belongs to the class-II pyridoxal-phosphate-dependent aminotransferase family. Histidinol-phosphate aminotransferase subfamily. Homodimer. The cofactor is pyridoxal 5'-phosphate.

The catalysed reaction is L-histidinol phosphate + 2-oxoglutarate = 3-(imidazol-4-yl)-2-oxopropyl phosphate + L-glutamate. It participates in amino-acid biosynthesis; L-histidine biosynthesis; L-histidine from 5-phospho-alpha-D-ribose 1-diphosphate: step 7/9. The polypeptide is Histidinol-phosphate aminotransferase (Cereibacter sphaeroides (strain ATCC 17029 / ATH 2.4.9) (Rhodobacter sphaeroides)).